An 846-amino-acid polypeptide reads, in one-letter code: Protein IRS1 (846 aa).

Disordered stretches follow at residues 1–82 (MAQR…NFWH), 366–385 (TGTA…ETEA), 606–626 (WLME…ATMP), and 714–846 (QVIP…HVHH). The segment covering 16–25 (RGRGAGGPSG) has biased composition (gly residues). The segment covering 26–56 (VGSSPPSSCVPMGAPSTAGTGASAAATTTPG) has biased composition (low complexity). The segment covering 722-732 (EPEDDDEDPTY) has biased composition (acidic residues). Over residues 832-846 (RPKKCQTHAPHHVHH) the composition is skewed to basic residues.

Belongs to the herpesviridae US22 family. As to quaternary structure, interacts (via N-terminus) with the viral DNA polymerase accessory subunit UL44. Interacts (via C-terminus) with host EIF2AK2/PKR.

The protein resides in the virion. It localises to the host cytoplasm. It is found in the host nucleus. Its function is as follows. Inhibits the establishment of the antiviral state in the infected cell. Prevents the phosphorylation of the host eukaryotic translation initiation factor eIF-2alpha and thus the shutoff of viral and cellular protein synthesis by directly interacting with EIF2AK2/PKR. May also participate in viral DNA replication by interacting with the DNA polymerase accessory protein and the lytic origin of replication, oriLyt. The chain is Protein IRS1 (IRS1) from Homo sapiens (Human).